A 347-amino-acid chain; its full sequence is Probable RNA methyltransferase azo0122 (347 aa).

Glu-89 (proton acceptor) is an active-site residue. One can recognise a Radical SAM core domain in the interval 92–318; it reads LLLRDGLCVS…AKLRQSAGQD (227 aa). An intrachain disulfide couples Cys-99 to Cys-323. [4Fe-4S] cluster is bound by residues Cys-106, Cys-110, and Cys-113. Residues 151–152, Ser-181, 204–206, and Asn-280 each bind S-adenosyl-L-methionine; these read GE and SLH. The S-methylcysteine intermediate role is filled by Cys-323.

The protein belongs to the radical SAM superfamily. RlmN family. The cofactor is [4Fe-4S] cluster.

The protein resides in the cytoplasm. In Azoarcus sp. (strain BH72), this protein is Probable RNA methyltransferase azo0122.